The following is a 366-amino-acid chain: tRNA/tmRNA (uracil-C(5))-methyltransferase (366 aa).

S-adenosyl-L-methionine contacts are provided by Q189, Y217, N222, E238, and D298. The active-site Nucleophile is the C323. E357 serves as the catalytic Proton acceptor.

It belongs to the class I-like SAM-binding methyltransferase superfamily. RNA M5U methyltransferase family. TrmA subfamily.

It carries out the reaction uridine(54) in tRNA + S-adenosyl-L-methionine = 5-methyluridine(54) in tRNA + S-adenosyl-L-homocysteine + H(+). The enzyme catalyses uridine(341) in tmRNA + S-adenosyl-L-methionine = 5-methyluridine(341) in tmRNA + S-adenosyl-L-homocysteine + H(+). Its function is as follows. Dual-specificity methyltransferase that catalyzes the formation of 5-methyluridine at position 54 (m5U54) in all tRNAs, and that of position 341 (m5U341) in tmRNA (transfer-mRNA). The protein is tRNA/tmRNA (uracil-C(5))-methyltransferase of Photorhabdus laumondii subsp. laumondii (strain DSM 15139 / CIP 105565 / TT01) (Photorhabdus luminescens subsp. laumondii).